We begin with the raw amino-acid sequence, 56 residues long: Large ribosomal subunit protein bL33 (56 aa).

The protein belongs to the bacterial ribosomal protein bL33 family.

This Acidovorax sp. (strain JS42) protein is Large ribosomal subunit protein bL33.